Consider the following 289-residue polypeptide: MAPKSAAQALFEKADKKANSSGGWFSSANSKWEEAGDLYQQAANAFKLEKQFKEAGDAFAREAECREKCKESLDAGNAWWNAAKAYKRGYPDLAIQALQQTIQHLVAGGRFRQAADREKEIAQIYLQETHDLSRACESFLRAGDWYAEEDATATANQCYKDAADLYAELEQFPQAITLYERVADHSLTSNLTKYSVKEYWLKSLLCTVALGDIVTARRNAQKYIGQDNTFVGTREFKFADALMEAVDAGDVGAYTAAVVEFDRITKLDNWKTAILLKIKRGIQEEPGLT.

This sequence belongs to the SNAP family.

The protein localises to the membrane. Functionally, required for vesicular transport between the endoplasmic reticulum and the Golgi apparatus. In Coprinopsis cinerea (strain Okayama-7 / 130 / ATCC MYA-4618 / FGSC 9003) (Inky cap fungus), this protein is Vesicular-fusion protein SEC17 (SEC17).